The primary structure comprises 122 residues: MIQKETNLVVADNSGAKKVRCIHVFGGTGRRYAGLGDQVIVSVKAAVPGGVVKKKDVCKAVVVRCAKEQRRKDGSYIRFDENAVVLLNAQGEPRGTRIFGPVARELRDRKYMKIVSLAPEVL.

Belongs to the universal ribosomal protein uL14 family. Part of the 50S ribosomal subunit. Forms a cluster with proteins L3 and L19. In the 70S ribosome, L14 and L19 interact and together make contacts with the 16S rRNA in bridges B5 and B8.

Binds to 23S rRNA. Forms part of two intersubunit bridges in the 70S ribosome. The sequence is that of Large ribosomal subunit protein uL14 from Chlorobium limicola (strain DSM 245 / NBRC 103803 / 6330).